We begin with the raw amino-acid sequence, 109 residues long: Large ribosomal subunit protein uL24 (109 aa).

This sequence belongs to the universal ribosomal protein uL24 family. In terms of assembly, part of the 50S ribosomal subunit.

Its function is as follows. One of two assembly initiator proteins, it binds directly to the 5'-end of the 23S rRNA, where it nucleates assembly of the 50S subunit. Functionally, one of the proteins that surrounds the polypeptide exit tunnel on the outside of the subunit. The protein is Large ribosomal subunit protein uL24 of Geotalea uraniireducens (strain Rf4) (Geobacter uraniireducens).